Reading from the N-terminus, the 408-residue chain is NADH-quinone oxidoreductase subunit D (408 aa).

Belongs to the complex I 49 kDa subunit family. As to quaternary structure, NDH-1 is composed of 14 different subunits. Subunits NuoB, C, D, E, F, and G constitute the peripheral sector of the complex.

It is found in the cell inner membrane. The enzyme catalyses a quinone + NADH + 5 H(+)(in) = a quinol + NAD(+) + 4 H(+)(out). NDH-1 shuttles electrons from NADH, via FMN and iron-sulfur (Fe-S) centers, to quinones in the respiratory chain. The immediate electron acceptor for the enzyme in this species is believed to be ubiquinone. Couples the redox reaction to proton translocation (for every two electrons transferred, four hydrogen ions are translocated across the cytoplasmic membrane), and thus conserves the redox energy in a proton gradient. The polypeptide is NADH-quinone oxidoreductase subunit D (Campylobacter hominis (strain ATCC BAA-381 / DSM 21671 / CCUG 45161 / LMG 19568 / NCTC 13146 / CH001A)).